The sequence spans 561 residues: Inner membrane ABC transporter ATP-binding protein YddA (561 aa).

Topologically, residues 1 to 3 are cytoplasmic; that stretch reads MIT. The chain crosses the membrane as a helical span at residues 4 to 24; the sequence is IPITLRMLIAKYLCLLKPFWL. At 25 to 31 the chain is on the periplasmic side; sequence RKNNKTS. A helical transmembrane segment spans residues 32-52; the sequence is VLLIIIILAMILGVVKIQVWL. The ABC transmembrane type-1 domain maps to 35–337; that stretch reads IIIILAMILG…FIYKYDELAE (303 aa). Topologically, residues 53 to 70 are cytoplasmic; that stretch reads NDWNNDFFNALSQKETDK. The chain crosses the membrane as a helical span at residues 71 to 91; sequence LWQLVLWFPALLGIFVLISVN. Residues 92–151 lie on the Periplasmic side of the membrane; sequence KTWLIKLLTIRWREWLTDYYLNRWFADKNYYFTQIYGEHKNTDNPDQRIAEDILLLISKT. The chain crosses the membrane as a helical span at residues 152-172; the sequence is LSLSFGFIQSLSMLITFTVIL. The Cytoplasmic portion of the chain corresponds to 173-187; that stretch reads WESAGTLSFTVGGTE. Residues 188-208 form a helical membrane-spanning segment; it reads WNIQGYMVYTVVLIVIGGTLF. Over 209 to 290 the chain is Periplasmic; it reads THKVGKRIRP…WQNIYSRSLS (82 aa). The chain crosses the membrane as a helical span at residues 291 to 311; that stretch reads VLPYFLLLPQFISGQINLGGL. The Cytoplasmic portion of the chain corresponds to 312–561; the sequence is MKSRQAFMLV…DDICDISAVL (250 aa). Residues 367-561 enclose the ABC transporter domain; that stretch reads VQVADASIRT…DDICDISAVL (195 aa). 400–407 is a binding site for ATP; that stretch reads GYSGAGKT.

This sequence belongs to the ABC transporter superfamily.

The protein localises to the cell inner membrane. The sequence is that of Inner membrane ABC transporter ATP-binding protein YddA (yddA) from Escherichia coli (strain K12).